The sequence spans 688 residues: DNA ligase (688 aa).

NAD(+) contacts are provided by residues 51–55 (DSEYD), 100–101 (SL), and Glu-129. The active-site N6-AMP-lysine intermediate is Lys-131. 4 residues coordinate NAD(+): Arg-152, Glu-189, Lys-308, and Lys-332. The Zn(2+) site is built by Cys-426, Cys-429, Cys-444, and Cys-450. A BRCT domain is found at 609 to 688 (ADEQPLKGQT…DELLALLANS (80 aa)).

The protein belongs to the NAD-dependent DNA ligase family. LigA subfamily. Mg(2+) is required as a cofactor. The cofactor is Mn(2+).

It carries out the reaction NAD(+) + (deoxyribonucleotide)n-3'-hydroxyl + 5'-phospho-(deoxyribonucleotide)m = (deoxyribonucleotide)n+m + AMP + beta-nicotinamide D-nucleotide.. DNA ligase that catalyzes the formation of phosphodiester linkages between 5'-phosphoryl and 3'-hydroxyl groups in double-stranded DNA using NAD as a coenzyme and as the energy source for the reaction. It is essential for DNA replication and repair of damaged DNA. This chain is DNA ligase, found in Shewanella sp. (strain MR-4).